The chain runs to 641 residues: Threonine--tRNA ligase (641 aa).

One can recognise a TGS domain in the interval Met1 to Thr61. The catalytic stretch occupies residues Asp242–Pro533. Cys333, His384, and His510 together coordinate Zn(2+).

It belongs to the class-II aminoacyl-tRNA synthetase family. Homodimer. Zn(2+) serves as cofactor.

The protein localises to the cytoplasm. It catalyses the reaction tRNA(Thr) + L-threonine + ATP = L-threonyl-tRNA(Thr) + AMP + diphosphate + H(+). Catalyzes the attachment of threonine to tRNA(Thr) in a two-step reaction: L-threonine is first activated by ATP to form Thr-AMP and then transferred to the acceptor end of tRNA(Thr). Also edits incorrectly charged L-seryl-tRNA(Thr). The sequence is that of Threonine--tRNA ligase from Marinobacter nauticus (strain ATCC 700491 / DSM 11845 / VT8) (Marinobacter aquaeolei).